The chain runs to 118 residues: MKLRANRVGEQMKKELGDIISRKIKDPRVGFVTVTDVQVSGDLQIATVYISVLGDEEQKENTLKGLAKAKGFIRSEIGQRIRLRKTPEISFEFDESIGYGHRIDTLLHEINKEGKREE.

Belongs to the RbfA family. As to quaternary structure, monomer. Binds 30S ribosomal subunits, but not 50S ribosomal subunits or 70S ribosomes.

Its subcellular location is the cytoplasm. In terms of biological role, one of several proteins that assist in the late maturation steps of the functional core of the 30S ribosomal subunit. Associates with free 30S ribosomal subunits (but not with 30S subunits that are part of 70S ribosomes or polysomes). Required for efficient processing of 16S rRNA. May interact with the 5'-terminal helix region of 16S rRNA. The chain is Ribosome-binding factor A from Bacillus cereus (strain AH820).